The primary structure comprises 239 residues: Lactate utilization protein A 2 (239 aa).

It belongs to the LutA/YkgE family.

In terms of biological role, is involved in L-lactate degradation and allows cells to grow with lactate as the sole carbon source. The chain is Lactate utilization protein A 2 from Bacillus mycoides (strain KBAB4) (Bacillus weihenstephanensis).